Here is a 736-residue protein sequence, read N- to C-terminus: Subtilisin-like protease SBT4.11 (736 aa).

A signal peptide spans 1–25 (MAKRGAFSSFHSFLIVLLFLNSVLA). The propeptide at 26–113 (VTHGHQDKQV…VFPNKKLKLQ (88 aa)) is activation peptide. One can recognise an Inhibitor I9 domain in the interval 35 to 112 (VYIVYMGSLP…SVFPNKKLKL (78 aa)). The region spanning 117 to 579 (SWDFMGLKEG…AGHVDPIAAT (463 aa)) is the Peptidase S8 domain. Asp-145 (charge relay system) is an active-site residue. An N-linked (GlcNAc...) asparagine glycan is attached at Asn-176. The active-site Charge relay system is the His-200. N-linked (GlcNAc...) asparagine glycans are attached at residues Asn-215 and Asn-223. The PA domain occupies 355 to 437 (KFPLVYGKSA…GLQKDDFESV (83 aa)). Ser-518 functions as the Charge relay system in the catalytic mechanism. N-linked (GlcNAc...) asparagine glycosylation is found at Asn-555, Asn-602, Asn-638, Asn-646, and Asn-656.

Belongs to the peptidase S8 family. In terms of processing, the C-terminal propeptide is autocleaved.

The protein localises to the secreted. The sequence is that of Subtilisin-like protease SBT4.11 from Arabidopsis thaliana (Mouse-ear cress).